Consider the following 148-residue polypeptide: Sec-independent protein translocase protein TatB (148 aa).

A helical membrane pass occupies residues 1-21 (MFDIGFWELVVIGIVALVVLG).

This sequence belongs to the TatB family. In terms of assembly, the Tat system comprises two distinct complexes: a TatABC complex, containing multiple copies of TatA, TatB and TatC subunits, and a separate TatA complex, containing only TatA subunits. Substrates initially bind to the TatABC complex, which probably triggers association of the separate TatA complex to form the active translocon.

It is found in the cell inner membrane. Its function is as follows. Part of the twin-arginine translocation (Tat) system that transports large folded proteins containing a characteristic twin-arginine motif in their signal peptide across membranes. Together with TatC, TatB is part of a receptor directly interacting with Tat signal peptides. TatB may form an oligomeric binding site that transiently accommodates folded Tat precursor proteins before their translocation. This is Sec-independent protein translocase protein TatB from Aeromonas salmonicida (strain A449).